The sequence spans 71 residues: Hainantoxin-X-2 (71 aa).

The first 26 residues, 1–26 (MKTAIFTVVLALAVFAVLCLVVSTHA), serve as a signal peptide directing secretion. Positions 27 to 43 (ERHSKTDMEDSPMIQER) are excised as a propeptide. 2 disulfide bridges follow: C52/C65 and C61/C70.

Belongs to the neurotoxin 36 family. 02 subfamily. In terms of tissue distribution, expressed by the venom gland.

The protein localises to the secreted. Reversibly blocks N-type calcium channels (Cav2.2/CACNA1B) in rat dorsal root ganglion cells. Elicits no toxic symptoms in either vertebrates or invertebrates during a period of 48 hours post-injection, when it was assayed in vivo by direct injection into mice and cockroaches. The chain is Hainantoxin-X-2 from Cyriopagopus hainanus (Chinese bird spider).